The primary structure comprises 453 residues: Malate dehydrogenase [NADP], chloroplastic (453 aa).

The N-terminal 68 residues, 1-68 (MAVVKLSPWA…RLSSPASIRC (68 aa)), are a transit peptide targeting the chloroplast. A disulfide bridge connects residues Cys88 and Cys93. 117–123 (GAAGMIS) is an NADP(+) binding site. 2 residues coordinate substrate: Arg198 and Arg204. Residues Asn211, Gln218, and 235 to 237 (VGN) contribute to the NADP(+) site. Substrate is bound by residues Asn237 and Arg268. The Proton acceptor role is filled by His293. An intrachain disulfide couples Cys429 to Cys441.

It belongs to the LDH/MDH superfamily. MDH type 2 family. As to quaternary structure, homodimer.

It localises to the plastid. It is found in the chloroplast. It carries out the reaction (S)-malate + NADP(+) = oxaloacetate + NADPH + H(+). Its activity is regulated as follows. Chloroplast NADP-MDH is activated upon illumination. In order to be enzymatically active, disulfide bridges on the protein must be reduced by thioredoxin which receives electrons from ferredoxin and the electron transport system of photosynthesis. Functionally, the chloroplastic, NADP-dependent form is essential for the photosynthesis C4 cycle, which allows plants to circumvent the problem of photorespiration. In C4 plants, NADP-MDH activity acts to convert oxaloacetate to malate in chloroplasts of mesophyll cells for transport to the bundle sheath cells. The polypeptide is Malate dehydrogenase [NADP], chloroplastic (Flaveria bidentis (Coastal plain yellowtops)).